Reading from the N-terminus, the 89-residue chain is Co-chaperonin GroES (89 aa).

This sequence belongs to the GroES chaperonin family. As to quaternary structure, heptamer of 7 subunits arranged in a ring. Interacts with the chaperonin GroEL.

Its subcellular location is the cytoplasm. Together with the chaperonin GroEL, plays an essential role in assisting protein folding. The GroEL-GroES system forms a nano-cage that allows encapsulation of the non-native substrate proteins and provides a physical environment optimized to promote and accelerate protein folding. GroES binds to the apical surface of the GroEL ring, thereby capping the opening of the GroEL channel. This chain is Co-chaperonin GroES, found in Petrotoga mobilis (strain DSM 10674 / SJ95).